A 189-amino-acid chain; its full sequence is Adenylate kinase (189 aa).

Residue 10–15 coordinates ATP; it reads AAGKGT. An NMP region spans residues 30–59; sequence STGDMLRAAIASGSELGQKVKGVLDRGELV. AMP contacts are provided by residues Thr31, Arg36, 57 to 59, 85 to 88, and Gln92; these read ELV and GFPR. Residues 126 to 136 form an LID region; that stretch reads KRFAEQGRPDD. Residue Arg127 participates in ATP binding. Residues Arg133 and Arg144 each contribute to the AMP site. Ala172 contributes to the ATP binding site.

It belongs to the adenylate kinase family. In terms of assembly, monomer.

The protein resides in the cytoplasm. The catalysed reaction is AMP + ATP = 2 ADP. The protein operates within purine metabolism; AMP biosynthesis via salvage pathway; AMP from ADP: step 1/1. Functionally, catalyzes the reversible transfer of the terminal phosphate group between ATP and AMP. Plays an important role in cellular energy homeostasis and in adenine nucleotide metabolism. The chain is Adenylate kinase from Caulobacter sp. (strain K31).